We begin with the raw amino-acid sequence, 189 residues long: MKTKNRPPRRRAPVQDTEATPGEGTPDGSLPNPGPEPAKGLRSRPARAAARAPGEGRRRRPGPSGPGGRRDSSIQRRLESNERERQRMHKLNNAFQALREVIPHVRADKKLSKIETLTLAKNYIKSLTATILTMSSSRLPGLEGPGPKLYQHYQQQQQVAGGALGATEAQPQGHLQRYSTQIHSFREGT.

Positions 1–12 (MKTKNRPPRRRA) are enriched in basic residues. 2 disordered regions span residues 1–85 (MKTK…ERER) and 167–189 (TEAQ…REGT). Thr25 carries the phosphothreonine modification. The span at 68–85 (GRRDSSIQRRLESNERER) shows a compositional bias: basic and acidic residues. In terms of domain architecture, bHLH spans 75–127 (QRRLESNERERQRMHKLNNAFQALREVIPHVRADKKLSKIETLTLAKNYIKSL).

As to quaternary structure, forms homodimers or heterodimers with TCF3 gene products E12 and E47. These dimers bind to the E-box site, however, heterodimer with MYOD1 does not bind target DNA. In terms of tissue distribution, expressed in brain, liver, spleen and skeletal muscle.

Its subcellular location is the nucleus. In terms of biological role, plays a role in controlling the transcriptional activity of MYOD1, ensuring that expanding myoblast populations remain undifferentiated. Repression may occur through muscle-specific E-box occupancy by homodimers. May also negatively regulate bHLH-mediated transcription through an N-terminal repressor domain. Serves as a key regulator of acinar cell function, stability, and identity. Also required for normal organelle localization in exocrine cells and for mitochondrial calcium ion transport. May function as a unique regulator of gene expression in several different embryonic and postnatal cell lineages. Binds to the E-box consensus sequence 5'-CANNTG-3'. This is Class A basic helix-loop-helix protein 15 (BHLHA15) from Homo sapiens (Human).